The primary structure comprises 58 residues: uncharacterized protein (58 aa).

4Fe-4S ferredoxin-type domains follow at residues 2-27 (GIKILEKCVGCGNCVVFCPRRAIKTY) and 28-57 (GVAIVDENKCSNCGICARYCPINAIKVDTS). [4Fe-4S] cluster contacts are provided by C9, C12, C15, C19, C37, C40, C43, and C47.

[4Fe-4S] cluster is required as a cofactor.

Its function is as follows. Ferredoxins are iron-sulfur proteins that transfer electrons probably in the CO-dehydrogenase complex. This is an uncharacterized protein from Methanocaldococcus jannaschii (strain ATCC 43067 / DSM 2661 / JAL-1 / JCM 10045 / NBRC 100440) (Methanococcus jannaschii).